The following is a 64-amino-acid chain: Large ribosomal subunit protein bL35 (64 aa).

The protein belongs to the bacterial ribosomal protein bL35 family.

The polypeptide is Large ribosomal subunit protein bL35 (Chlorobium limicola (strain DSM 245 / NBRC 103803 / 6330)).